The following is a 210-amino-acid chain: ATP-dependent Clp protease proteolytic subunit (210 aa).

S111 acts as the Nucleophile in catalysis. The active site involves H136.

Belongs to the peptidase S14 family. In terms of assembly, fourteen ClpP subunits assemble into 2 heptameric rings which stack back to back to give a disk-like structure with a central cavity, resembling the structure of eukaryotic proteasomes.

It localises to the cytoplasm. It catalyses the reaction Hydrolysis of proteins to small peptides in the presence of ATP and magnesium. alpha-casein is the usual test substrate. In the absence of ATP, only oligopeptides shorter than five residues are hydrolyzed (such as succinyl-Leu-Tyr-|-NHMec, and Leu-Tyr-Leu-|-Tyr-Trp, in which cleavage of the -Tyr-|-Leu- and -Tyr-|-Trp bonds also occurs).. In terms of biological role, cleaves peptides in various proteins in a process that requires ATP hydrolysis. Has a chymotrypsin-like activity. Plays a major role in the degradation of misfolded proteins. This chain is ATP-dependent Clp protease proteolytic subunit, found in Halorhodospira halophila (strain DSM 244 / SL1) (Ectothiorhodospira halophila (strain DSM 244 / SL1)).